A 104-amino-acid polypeptide reads, in one-letter code: Large ribosomal subunit protein bL21 (104 aa).

This sequence belongs to the bacterial ribosomal protein bL21 family. In terms of assembly, part of the 50S ribosomal subunit. Contacts protein L20.

In terms of biological role, this protein binds to 23S rRNA in the presence of protein L20. In Gluconobacter oxydans (strain 621H) (Gluconobacter suboxydans), this protein is Large ribosomal subunit protein bL21.